Here is a 324-residue protein sequence, read N- to C-terminus: Alkanal monooxygenase beta chain (324 aa).

Belongs to the bacterial luciferase oxidoreductase family. As to quaternary structure, heterodimer of an alpha and a beta chain.

The enzyme catalyses a long-chain fatty aldehyde + FMNH2 + O2 = a long-chain fatty acid + hnu + FMN + H2O + 2 H(+). Functionally, light-emitting reaction in luminous bacteria. The specific role of the beta subunit is unknown, but it is absolutely required for bioluminescence activity. The sequence is that of Alkanal monooxygenase beta chain (luxB) from Vibrio harveyi (Beneckea harveyi).